The chain runs to 505 residues: GLPWYRVHTVLINDPGRLIAAHLMHTALVAGWAGSMALYELATFDPSDPVLNPMWRQGMFVLPFMARLGVTGSWSGWSITGETGIDPGFWSFEGVALAHIVLSGLLFLAACWHWVYWDLELFRDPRTGEPALDLPKMFGIHLFLAGLLCFGFGAFHLTGLFGPGMWVSDPYGLTGSVQPVAPEWGPDGFNPYNPGGVVAHHIAAGIVGIIAGLFHILVRPPQRLYKALRMGNIETVLSSSIAAVFFAAFVVAGTMWYGSATTPIELFGPTRYQWDSSYFQQEINRRVQASLASGATLEEAWSAIPEKLAFYDYIGNNPAKGGLFRTGPMNKGDGIAQAWKGHAVFRNKEGEELFVRRMPAFFESFPVILTDKNGVVKADIPFRRAESKYSFEQQGVTVSFYGGELNGQTFTDPPTVKSYARKAIFGEIFEFDTETLNSDGIFRTSPRGWFTFAHAVFALLFFFGHIWHGARTLFRDVFSGIDPELSPEQVEWGFYQKVGDVTTRK.

At glycine 1–isoleucine 19 the chain is on the cytoplasmic side. Positions 8, 22, 25, 99, and 113 each coordinate chlorophyll a. Residues alanine 20 to serine 35 traverse the membrane as a helical segment. Over methionine 36–histidine 99 the chain is Lumenal. The helical transmembrane segment at isoleucine 100–tryptophan 114 threads the bilayer. Residues valine 115 to phenylalanine 138 lie on the Cytoplasmic side of the membrane. Residues glycine 139–phenylalanine 155 traverse the membrane as a helical segment. Chlorophyll a contacts are provided by histidine 141, histidine 156, histidine 200, histidine 201, and histidine 215. Topologically, residues histidine 156 to histidine 201 are lumenal. The chain crosses the membrane as a helical span at residues isoleucine 202–leucine 217. Over valine 218–threonine 235 the chain is Cytoplasmic. Residues valine 236–valine 251 traverse the membrane as a helical segment. Over alanine 252–alanine 455 the chain is Lumenal. Chlorophyll a-binding residues include histidine 454, histidine 465, and histidine 468. A helical membrane pass occupies residues valine 456–arginine 471. Residues threonine 472–lysine 505 lie on the Cytoplasmic side of the membrane.

It belongs to the PsbB/PsbC family. PsbB subfamily. In terms of assembly, PSII is composed of 1 copy each of membrane proteins PsbA, PsbB, PsbC, PsbD, PsbE, PsbF, PsbH, PsbI, PsbJ, PsbK, PsbL, PsbM, PsbT, PsbX, PsbY, PsbZ, Psb30/Ycf12, peripheral proteins PsbO, CyanoQ (PsbQ), PsbU, PsbV and a large number of cofactors. It forms dimeric complexes. Binds multiple chlorophylls. PSII binds additional chlorophylls, carotenoids and specific lipids. serves as cofactor.

It localises to the cellular thylakoid membrane. Its function is as follows. One of the components of the core complex of photosystem II (PSII). It binds chlorophyll and helps catalyze the primary light-induced photochemical processes of PSII. PSII is a light-driven water:plastoquinone oxidoreductase, using light energy to abstract electrons from H(2)O, generating O(2) and a proton gradient subsequently used for ATP formation. The chain is Photosystem II CP47 reaction center protein from Thermostichus vulcanus (Synechococcus vulcanus).